Consider the following 420-residue polypeptide: Histidine--tRNA ligase (420 aa).

This sequence belongs to the class-II aminoacyl-tRNA synthetase family. As to quaternary structure, homodimer.

It is found in the cytoplasm. It carries out the reaction tRNA(His) + L-histidine + ATP = L-histidyl-tRNA(His) + AMP + diphosphate + H(+). This chain is Histidine--tRNA ligase, found in Saccharopolyspora erythraea (strain ATCC 11635 / DSM 40517 / JCM 4748 / NBRC 13426 / NCIMB 8594 / NRRL 2338).